Consider the following 227-residue polypeptide: Pectinesterase inhibitor 28 (227 aa).

An N-terminal signal peptide occupies residues 1 to 25 (MASSMAPAAAMAILLLALLMPATLC). The disordered stretch occupies residues 28-50 (SGPPSSKHGHGGHAKRAPPPASP). Over residues 34–43 (KHGHGGHAKR) the composition is skewed to basic residues. Cysteines 66 and 75 form a disulfide. Asn67, Asn104, and Asn117 each carry an N-linked (GlcNAc...) asparagine glycan. Cys139 and Cys179 are disulfide-bonded.

Belongs to the PMEI family. As to expression, expressed in roots, leaves, culms and flag leaves.

The protein localises to the secreted. The protein resides in the extracellular space. Its subcellular location is the apoplast. Its function is as follows. Pectin methylesterase (PME) inhibitor that inhibits PME in vitro. Functions as a critical structural modulator by regulating the degree of pectin methylesterification and the physiochemical properties of the cell wall components. The protein is Pectinesterase inhibitor 28 of Oryza sativa subsp. japonica (Rice).